Here is a 416-residue protein sequence, read N- to C-terminus: Venom allergen 5 (416 aa).

The signal sequence occupies residues 1–24; that stretch reads MKGILLLFLKLVVLFVYLCSSVLS. The SCP domain maps to 57–217; sequence DDRNTIINLH…NYGPAGNLDD (161 aa). At R82 the chain carries Arginine amide; in Cryptide Pep-4.

This sequence belongs to the CRISP family. Venom allergen 5-like subfamily. In terms of processing, contains 9 disulfide bonds. Expressed by the venom gland.

Its subcellular location is the secreted. Functionally, presents weak lactate dehydrogenase (LDH) release from mast cells. Does not induce hemolytic activity, mast cell degranulation, and antimicrobial effects. In vivo, injection into mice causes moderate edema formation, but induces very weak or no change in nociceptive sensibility. It also causes an alteration in rearing (standing on hind limbs), but does not impact locomotion. This chain is Venom allergen 5, found in Tityus serrulatus (Brazilian scorpion).